The chain runs to 379 residues: Cinnamyl alcohol dehydrogenase 7 (379 aa).

Positions Met-1–Gln-13 are enriched in low complexity. Positions Met-1 to Arg-21 are disordered. A Zn(2+)-binding site is contributed by Cys-60. An NADP(+)-binding site is contributed by Ser-62. Positions 82, 83, 113, 116, 119, 127, and 185 each coordinate Zn(2+). NADP(+) is bound by residues Thr-189, Gly-210–Gly-215, Ser-233–Lys-238, Thr-273, Gly-297, and Ser-320–Met-322.

The protein belongs to the zinc-containing alcohol dehydrogenase family. As to quaternary structure, homodimer. Zn(2+) serves as cofactor. As to expression, expressed in roots, first internodes and panicles. Expressed in the vascular bundles and sclerenchyma cells below the epidermis in leaves and stems.

It catalyses the reaction (E)-cinnamyl alcohol + NADP(+) = (E)-cinnamaldehyde + NADPH + H(+). The enzyme catalyses (E)-coniferol + NADP(+) = (E)-coniferaldehyde + NADPH + H(+). It carries out the reaction (E)-sinapyl alcohol + NADP(+) = (E)-sinapaldehyde + NADPH + H(+). The catalysed reaction is (E)-4-coumaroyl alcohol + NADP(+) = (E)-4-coumaraldehyde + NADPH + H(+). It catalyses the reaction (E)-caffeyl alcohol + NADP(+) = (E)-caffeyl aldehyde + NADPH + H(+). It participates in aromatic compound metabolism; phenylpropanoid biosynthesis. Functionally, involved in lignin biosynthesis. May catalyze the final step specific for the production of lignin monomers, like coniferyl alcohol, sinapyl alcohol and 4-coumaryl alcohol. This is Cinnamyl alcohol dehydrogenase 7 from Oryza sativa subsp. japonica (Rice).